A 398-amino-acid polypeptide reads, in one-letter code: Serine/threonine-protein kinase ppk23 (398 aa).

Residues 74–359 (YEILEKIEEG…AKEALEHPYF (286 aa)) form the Protein kinase domain. Residues 80–88 (IEEGSYGIV) and Lys-103 contribute to the ATP site. Asp-198 (proton acceptor) is an active-site residue. The interval 359–398 (FYESPRPKDPKFFPTFPSKAKGESKEKNVFQSFRSASPKK) is disordered. Polar residues predominate over residues 387–398 (VFQSFRSASPKK).

Belongs to the protein kinase superfamily. Ser/Thr protein kinase family.

It is found in the nucleus. The catalysed reaction is L-seryl-[protein] + ATP = O-phospho-L-seryl-[protein] + ADP + H(+). It carries out the reaction L-threonyl-[protein] + ATP = O-phospho-L-threonyl-[protein] + ADP + H(+). The sequence is that of Serine/threonine-protein kinase ppk23 (ppk23) from Schizosaccharomyces pombe (strain 972 / ATCC 24843) (Fission yeast).